The following is a 350-amino-acid chain: Nicotinate-nucleotide--dimethylbenzimidazole phosphoribosyltransferase (350 aa).

The Proton acceptor role is filled by Glu316.

The protein belongs to the CobT family.

It catalyses the reaction 5,6-dimethylbenzimidazole + nicotinate beta-D-ribonucleotide = alpha-ribazole 5'-phosphate + nicotinate + H(+). Its pathway is nucleoside biosynthesis; alpha-ribazole biosynthesis; alpha-ribazole from 5,6-dimethylbenzimidazole: step 1/2. Its function is as follows. Catalyzes the synthesis of alpha-ribazole-5'-phosphate from nicotinate mononucleotide (NAMN) and 5,6-dimethylbenzimidazole (DMB). This is Nicotinate-nucleotide--dimethylbenzimidazole phosphoribosyltransferase from Pseudomonas syringae pv. tomato (strain ATCC BAA-871 / DC3000).